Reading from the N-terminus, the 155-residue chain is Putative pre-16S rRNA nuclease (155 aa).

Belongs to the YqgF nuclease family.

The protein localises to the cytoplasm. Functionally, could be a nuclease involved in processing of the 5'-end of pre-16S rRNA. This is Putative pre-16S rRNA nuclease from Xanthomonas axonopodis pv. citri (strain 306).